Reading from the N-terminus, the 492-residue chain is Diacylglycerol kinase 7 (492 aa).

Positions A90 to S248 constitute a DAGKc domain.

It belongs to the eukaryotic diacylglycerol kinase family. As to quaternary structure, monomer. In terms of tissue distribution, highly expressed in flowers, and at low levels in roots, stems and leaves.

It catalyses the reaction a 1,2-diacyl-sn-glycerol + ATP = a 1,2-diacyl-sn-glycero-3-phosphate + ADP + H(+). Phosphorylates the second messenger diacylglycerol (DAG) to generate phosphatidic acid (PA), another important signaling molecule. PA is required for plant development and responses to abiotic stress and pathogen attack. May be involved in the accumulation of PA during cold stress xhibits high specificity for 1,2-dioleoyl-sn-glycerol (1,2-DOG), 1-palmitoyl, 2-oleoyl-sn-glycerol (1,2 POG), 1-stearoyl, 2-linoleoyl-sn-glycerol (1,2-SLG) and 1-oleoyl, 2-palmitoyl-sn-glycerol (1,2-OPG). The protein is Diacylglycerol kinase 7 (DGK7) of Arabidopsis thaliana (Mouse-ear cress).